The following is a 161-amino-acid chain: Phosphopantetheine adenylyltransferase (161 aa).

Ser-9 contacts substrate. ATP is bound by residues 9–10 (SF) and His-17. The substrate site is built by Lys-41, Val-73, and Lys-87. ATP is bound by residues 88–90 (GLR), Glu-98, and 122–128 (YSFVSSS).

Belongs to the bacterial CoaD family. In terms of assembly, homohexamer. Mg(2+) serves as cofactor.

The protein localises to the cytoplasm. It carries out the reaction (R)-4'-phosphopantetheine + ATP + H(+) = 3'-dephospho-CoA + diphosphate. Its pathway is cofactor biosynthesis; coenzyme A biosynthesis; CoA from (R)-pantothenate: step 4/5. Functionally, reversibly transfers an adenylyl group from ATP to 4'-phosphopantetheine, yielding dephospho-CoA (dPCoA) and pyrophosphate. This is Phosphopantetheine adenylyltransferase from Mycobacterium bovis (strain ATCC BAA-935 / AF2122/97).